The following is a 123-amino-acid chain: Small ribosomal subunit protein uS12 (123 aa).

At Asp89 the chain carries 3-methylthioaspartic acid. The segment at 104-123 is disordered; it reads SVGVKDRKKSRSKYGAKRPK. The segment covering 109–123 has biased composition (basic residues); sequence DRKKSRSKYGAKRPK.

The protein belongs to the universal ribosomal protein uS12 family. Part of the 30S ribosomal subunit. Contacts proteins S8 and S17. May interact with IF1 in the 30S initiation complex.

Functionally, with S4 and S5 plays an important role in translational accuracy. In terms of biological role, interacts with and stabilizes bases of the 16S rRNA that are involved in tRNA selection in the A site and with the mRNA backbone. Located at the interface of the 30S and 50S subunits, it traverses the body of the 30S subunit contacting proteins on the other side and probably holding the rRNA structure together. The combined cluster of proteins S8, S12 and S17 appears to hold together the shoulder and platform of the 30S subunit. The sequence is that of Small ribosomal subunit protein uS12 from Pelobacter propionicus (strain DSM 2379 / NBRC 103807 / OttBd1).